We begin with the raw amino-acid sequence, 418 residues long: Coenzyme A biosynthesis bifunctional protein CoaBC (418 aa).

The phosphopantothenoylcysteine decarboxylase stretch occupies residues 1–195 (MVDHKRIPKQ…ALPYDLAGRK (195 aa)). The segment at 196–418 (LLVTAGGTRE…IVTFLAGCSS (223 aa)) is phosphopantothenate--cysteine ligase. Residues aspartate 285, lysine 295, phenylalanine 336, lysine 354, and lysine 358 each contribute to the CTP site.

This sequence in the N-terminal section; belongs to the HFCD (homo-oligomeric flavin containing Cys decarboxylase) superfamily. The protein in the C-terminal section; belongs to the PPC synthetase family. It depends on Mg(2+) as a cofactor. Requires FMN as cofactor.

It catalyses the reaction N-[(R)-4-phosphopantothenoyl]-L-cysteine + H(+) = (R)-4'-phosphopantetheine + CO2. The catalysed reaction is (R)-4'-phosphopantothenate + L-cysteine + CTP = N-[(R)-4-phosphopantothenoyl]-L-cysteine + CMP + diphosphate + H(+). The protein operates within cofactor biosynthesis; coenzyme A biosynthesis; CoA from (R)-pantothenate: step 2/5. It functions in the pathway cofactor biosynthesis; coenzyme A biosynthesis; CoA from (R)-pantothenate: step 3/5. In terms of biological role, catalyzes two sequential steps in the biosynthesis of coenzyme A. In the first step cysteine is conjugated to 4'-phosphopantothenate to form 4-phosphopantothenoylcysteine. In the second step the latter compound is decarboxylated to form 4'-phosphopantotheine. This Mycobacterium bovis (strain ATCC BAA-935 / AF2122/97) protein is Coenzyme A biosynthesis bifunctional protein CoaBC.